Consider the following 375-residue polypeptide: Coproporphyrin III ferrochelatase (375 aa).

2 residues coordinate Fe-coproporphyrin III: Ser-59 and Tyr-128. Positions 191 and 286 each coordinate Fe(2+).

It belongs to the ferrochelatase family.

The protein resides in the cytoplasm. The enzyme catalyses Fe-coproporphyrin III + 2 H(+) = coproporphyrin III + Fe(2+). It functions in the pathway porphyrin-containing compound metabolism; protoheme biosynthesis. Involved in coproporphyrin-dependent heme b biosynthesis. Catalyzes the insertion of ferrous iron into coproporphyrin III to form Fe-coproporphyrin III. This chain is Coproporphyrin III ferrochelatase, found in Streptomyces griseus subsp. griseus (strain JCM 4626 / CBS 651.72 / NBRC 13350 / KCC S-0626 / ISP 5235).